Reading from the N-terminus, the 332-residue chain is 2,3-diketo-L-gulonate reductase (332 aa).

His-44 (proton donor) is an active-site residue. NAD(+) is bound by residues 168–174 (ITMVDMS), 224–225 (WK), and 304–306 (GHE).

Belongs to the LDH2/MDH2 oxidoreductase family. DlgD subfamily. Homodimer.

Its subcellular location is the cytoplasm. It carries out the reaction 3-dehydro-L-gulonate + NAD(+) = 2,3-dioxo-L-gulonate + NADH + H(+). The enzyme catalyses 3-dehydro-L-gulonate + NADP(+) = 2,3-dioxo-L-gulonate + NADPH + H(+). Functionally, catalyzes the reduction of 2,3-diketo-L-gulonate in the presence of NADH, to form 3-keto-L-gulonate. This is 2,3-diketo-L-gulonate reductase from Escherichia coli O1:K1 / APEC.